Reading from the N-terminus, the 620-residue chain is Glutathione-regulated potassium-efflux system protein KefC (620 aa).

The next 12 helical transmembrane spans lie at 4–24 (HTLL…PIAV), 26–46 (LGLG…PWGL), 54–74 (SILH…GLEL), 90–110 (GALQ…FLGL), 114–134 (VAEL…MQAM), 149–169 (FAVL…IPLL), 178–198 (LGAF…VVLL), 218–238 (VFSA…EEVG), 270–290 (GLLL…GTLV), 294–314 (LRIL…LWLV), 327–347 (WFAV…GAAQ), and 359–379 (ALTL…VLLT). The RCK N-terminal domain maps to 399-518 (QPRVIVAGFG…AGVAMPERET (120 aa)). The tract at residues 599–620 (QGTAEGKHSGEVADEPEVKPSI) is disordered.

It belongs to the monovalent cation:proton antiporter 2 (CPA2) transporter (TC 2.A.37) family. KefC subfamily. In terms of assembly, homodimer. Interacts with the regulatory subunit KefF.

The protein resides in the cell inner membrane. Its function is as follows. Pore-forming subunit of a potassium efflux system that confers protection against electrophiles. Catalyzes K(+)/H(+) antiport. This chain is Glutathione-regulated potassium-efflux system protein KefC, found in Salmonella agona (strain SL483).